We begin with the raw amino-acid sequence, 376 residues long: MSKRDYYEVLGVGRDTSEREIKKAYKRLAMKFHPDRNPGDKAAEASFKEIKEAYEILTDSDKKAAYDQFGHAGVDPNRGGHGGGQGDFGDIFGDVFGDIFGGGRRGGGQRQAARGSDLRYNLELSLEEAVRGLTKELRIPTLAACDLCDGSGAKKGTSATTCGTCHGQGQVQMRQGFFAVQQACPTCHGRGKIIKDPCGKCHGEGRVEKSKTLSVKIPAGVDTGDRIRLTGEGEAGEFGAPPGDLYVQVSVREHAIFTRDANNLYCEVPISFSKAALGGEIEVPTLDGKVSLKIPTETQTGRMFRLRGKGVKSVRSHAVGDLLCKVVMETPVNLNEKQKELLREFEATLTGESKKHSPKAEGFFDGVKKFFQDLNS.

One can recognise a J domain in the interval 5-70 (DYYEVLGVGR…DKKAAYDQFG (66 aa)). The segment at 132–210 (GLTKELRIPT…CHGEGRVEKS (79 aa)) adopts a CR-type zinc-finger fold. Zn(2+) contacts are provided by cysteine 145, cysteine 148, cysteine 162, cysteine 165, cysteine 184, cysteine 187, cysteine 198, and cysteine 201. CXXCXGXG motif repeat units lie at residues 145–152 (CDLCDGSG), 162–169 (CGTCHGQG), 184–191 (CPTCHGRG), and 198–205 (CGKCHGEG).

This sequence belongs to the DnaJ family. As to quaternary structure, homodimer. Zn(2+) serves as cofactor.

Its subcellular location is the cytoplasm. In terms of biological role, participates actively in the response to hyperosmotic and heat shock by preventing the aggregation of stress-denatured proteins and by disaggregating proteins, also in an autonomous, DnaK-independent fashion. Unfolded proteins bind initially to DnaJ; upon interaction with the DnaJ-bound protein, DnaK hydrolyzes its bound ATP, resulting in the formation of a stable complex. GrpE releases ADP from DnaK; ATP binding to DnaK triggers the release of the substrate protein, thus completing the reaction cycle. Several rounds of ATP-dependent interactions between DnaJ, DnaK and GrpE are required for fully efficient folding. Also involved, together with DnaK and GrpE, in the DNA replication of plasmids through activation of initiation proteins. This chain is Chaperone protein DnaJ, found in Shewanella frigidimarina (strain NCIMB 400).